Consider the following 362-residue polypeptide: Peptide chain release factor 1 (362 aa).

Gln-240 is subject to N5-methylglutamine.

The protein belongs to the prokaryotic/mitochondrial release factor family. Methylated by PrmC. Methylation increases the termination efficiency of RF1.

It localises to the cytoplasm. Its function is as follows. Peptide chain release factor 1 directs the termination of translation in response to the peptide chain termination codons UAG and UAA. This is Peptide chain release factor 1 from Bifidobacterium longum subsp. infantis (strain ATCC 15697 / DSM 20088 / JCM 1222 / NCTC 11817 / S12).